A 337-amino-acid chain; its full sequence is MSVAGGLEYLEKLRDFFYGLAELRDRLKERGFTWPRPYPAEGVAAGTVKVKAGFPAMLRNGVIMDVTNVEQAQIAEEAGAVGVMVLDKLPYDVRKAGGVARMADLKVIEEVMSHVTIPVSAKVRIGHYYEAFLLQEIGVDLIDESEVLTPVDDQHHINKWLFTVPFVNGCRELCEALRRISEGASMIRSKGEAGTGNVSEAVKHFKALYRAINELAAAEEERLRDYARQCQAPLELVALTARLGRLPVITFAAGGIATPADAALMMWLGADGVFVGSGIFKSQDPRQRAEAIVLATAKWDDPEAVVEAQKMVSERAAMVGIDIKTLKPEELLQTRGL.

Residue aspartate 65 participates in D-ribose 5-phosphate binding. The active-site Schiff-base intermediate with D-ribose 5-phosphate is the lysine 122. Glycine 194 lines the D-ribose 5-phosphate pocket. Lysine 206 provides a ligand contact to D-glyceraldehyde 3-phosphate. Residues glycine 255 and 276–277 (GS) contribute to the D-ribose 5-phosphate site.

The protein belongs to the PdxS/SNZ family. In terms of assembly, in the presence of PdxT, forms a dodecamer of heterodimers.

It catalyses the reaction aldehydo-D-ribose 5-phosphate + D-glyceraldehyde 3-phosphate + L-glutamine = pyridoxal 5'-phosphate + L-glutamate + phosphate + 3 H2O + H(+). It functions in the pathway cofactor biosynthesis; pyridoxal 5'-phosphate biosynthesis. In terms of biological role, catalyzes the formation of pyridoxal 5'-phosphate from ribose 5-phosphate (RBP), glyceraldehyde 3-phosphate (G3P) and ammonia. The ammonia is provided by the PdxT subunit. Can also use ribulose 5-phosphate and dihydroxyacetone phosphate as substrates, resulting from enzyme-catalyzed isomerization of RBP and G3P, respectively. This chain is Pyridoxal 5'-phosphate synthase subunit PdxS, found in Pyrobaculum arsenaticum (strain DSM 13514 / JCM 11321 / PZ6).